The following is a 322-amino-acid chain: Phosphatidylserine decarboxylase proenzyme (322 aa).

Active-site charge relay system; for autoendoproteolytic cleavage activity residues include Asp-90, His-147, and Ser-254. Ser-254 serves as the catalytic Schiff-base intermediate with substrate; via pyruvic acid; for decarboxylase activity. Ser-254 bears the Pyruvic acid (Ser); by autocatalysis mark. The tract at residues 293–322 (PDAEPAPLPAEEIEAEHDASPLVDDKKDQV) is disordered. The segment covering 308–322 (EHDASPLVDDKKDQV) has biased composition (basic and acidic residues).

This sequence belongs to the phosphatidylserine decarboxylase family. PSD-B subfamily. Prokaryotic type I sub-subfamily. As to quaternary structure, heterodimer of a large membrane-associated beta subunit and a small pyruvoyl-containing alpha subunit. Pyruvate is required as a cofactor. In terms of processing, is synthesized initially as an inactive proenzyme. Formation of the active enzyme involves a self-maturation process in which the active site pyruvoyl group is generated from an internal serine residue via an autocatalytic post-translational modification. Two non-identical subunits are generated from the proenzyme in this reaction, and the pyruvate is formed at the N-terminus of the alpha chain, which is derived from the carboxyl end of the proenzyme. The autoendoproteolytic cleavage occurs by a canonical serine protease mechanism, in which the side chain hydroxyl group of the serine supplies its oxygen atom to form the C-terminus of the beta chain, while the remainder of the serine residue undergoes an oxidative deamination to produce ammonia and the pyruvoyl prosthetic group on the alpha chain. During this reaction, the Ser that is part of the protease active site of the proenzyme becomes the pyruvoyl prosthetic group, which constitutes an essential element of the active site of the mature decarboxylase.

Its subcellular location is the cell membrane. It carries out the reaction a 1,2-diacyl-sn-glycero-3-phospho-L-serine + H(+) = a 1,2-diacyl-sn-glycero-3-phosphoethanolamine + CO2. It participates in phospholipid metabolism; phosphatidylethanolamine biosynthesis; phosphatidylethanolamine from CDP-diacylglycerol: step 2/2. Its function is as follows. Catalyzes the formation of phosphatidylethanolamine (PtdEtn) from phosphatidylserine (PtdSer). The protein is Phosphatidylserine decarboxylase proenzyme of Escherichia coli O9:H4 (strain HS).